The primary structure comprises 297 residues: 33 kDa chaperonin (297 aa).

Cystine bridges form between cysteine 232–cysteine 234 and cysteine 266–cysteine 269.

The protein belongs to the HSP33 family. Under oxidizing conditions two disulfide bonds are formed involving the reactive cysteines. Under reducing conditions zinc is bound to the reactive cysteines and the protein is inactive.

Its subcellular location is the cytoplasm. Redox regulated molecular chaperone. Protects both thermally unfolding and oxidatively damaged proteins from irreversible aggregation. Plays an important role in the bacterial defense system toward oxidative stress. The protein is 33 kDa chaperonin of Azotobacter vinelandii (strain DJ / ATCC BAA-1303).